The sequence spans 394 residues: DNA repair protein brc-2 (394 aa).

The segment covering 1–12 has biased composition (basic and acidic residues); sequence MGDSSKKVKDSF. 2 disordered regions span residues 1 to 30 and 56 to 136; these read MGDSSKKVKDSFDTISEPDSFDEPKGVPIS and MLNS…EKKK. Positions 1 to 60 are interaction with rad-51; the sequence is MGDSSKKVKDSFDTISEPDSFDEPKGVPISMEPVFSTAAGIRIDVKQESIDKSKKMLNSD. The interval 28–62 is BRCA2 repeat-like region; the sequence is PISMEPVFSTAAGIRIDVKQESIDKSKKMLNSDLK. The segment covering 56-73 has biased composition (low complexity); sequence MLNSDLKSKSSSKGGFSS. The tract at residues 60 to 89 is interaction with rad-51-DNA complexes; sequence DLKSKSSSKGGFSSPLVRKNNGSSAFVSPF. Positions 124-134 are enriched in basic residues; it reads KKSKKHSKKEK. The interval 371–389 is required for ssDNA binding; sequence WKDFGSYLKHKEDKKKRRS.

Interacts (via N-terminus) with rad-51; regulates rad-51 recruitment to sites of DNA double strand breaks. Expressed in the germline, with highest expression in cells undergoing oogenesis.

The protein resides in the nucleus. The protein localises to the chromosome. Its function is as follows. Required for the homologous recombination repair of DNA double strand breaks, thereby playing a role in chromosome integrity. Acts by targeting rad-51 to sites of DNA damage and stabilizing rad-51-DNA filaments by blocking ATP hydrolysis catalyzed by rad-51. Promotes rad-51 mediated displacement-loop (D-loop) formation during strand invasion between the invading single-stranded DNA (ssDNA) and the homologous duplex DNA. Also functions independently of rad-51 in DNA double-strand break (DSB) repair by promoting DNA single-strand annealing (SSA) when the homologous recombination (HR) and non-homologous end joining (NHEJ) pathways are compromised. Binds selectively to single-stranded (ssDNA) via its C-terminus. Involved in telomere maintenance and replicative senescence. The sequence is that of DNA repair protein brc-2 from Caenorhabditis elegans.